Reading from the N-terminus, the 350-residue chain is Hydroxymethylglutaryl-CoA synthase (350 aa).

Glu83 serves as the catalytic Proton donor/acceptor. Cys115 serves as the catalytic Acyl-thioester intermediate. Residues Cys115 and Thr156 each coordinate (3S)-3-hydroxy-3-methylglutaryl-CoA. CoA is bound at residue Arg204. Residues Thr206 and His239 each contribute to the (3S)-3-hydroxy-3-methylglutaryl-CoA site. His239 (proton donor/acceptor) is an active-site residue. Position 244 (Lys244) interacts with CoA. (3S)-3-hydroxy-3-methylglutaryl-CoA is bound by residues Asn271 and Ser301.

It belongs to the thiolase-like superfamily. Archaeal HMG-CoA synthase family. In terms of assembly, interacts with acetoacetyl-CoA thiolase that catalyzes the precedent step in the pathway and with a DUF35 protein. The acetoacetyl-CoA thiolase/HMG-CoA synthase complex channels the intermediate via a fused CoA-binding site, which allows for efficient coupling of the endergonic thiolase reaction with the exergonic HMGCS reaction.

The enzyme catalyses acetoacetyl-CoA + acetyl-CoA + H2O = (3S)-3-hydroxy-3-methylglutaryl-CoA + CoA + H(+). It participates in metabolic intermediate biosynthesis; (R)-mevalonate biosynthesis; (R)-mevalonate from acetyl-CoA: step 2/3. Catalyzes the condensation of acetyl-CoA with acetoacetyl-CoA to form 3-hydroxy-3-methylglutaryl-CoA (HMG-CoA). Functions in the mevalonate (MVA) pathway leading to isopentenyl diphosphate (IPP), a key precursor for the biosynthesis of isoprenoid compounds that are building blocks of archaeal membrane lipids. The polypeptide is Hydroxymethylglutaryl-CoA synthase (Thermococcus gammatolerans (strain DSM 15229 / JCM 11827 / EJ3)).